The sequence spans 555 residues: Inositol 1,4,5-trisphosphate receptor-interacting protein-like 1 (555 aa).

An N-terminal signal peptide occupies residues 1–24 (MNVDAEASMAVISLLFLAVMYVVH). Over 25–103 (HPLMVSDRMD…WPFQADGQEG (79 aa)) the chain is Extracellular. Residues 38–74 (LARSRQLEKRMSEEMRLLEMEFEERKRAAEQRQKAEN) adopt a coiled-coil conformation. The helical transmembrane segment at 104–124 (PLGWMLGNLWNTGLFCLFLVF) threads the bilayer. At 125–555 (ELLRQNMQHE…LPHAPLAAAP (431 aa)) the chain is on the cytoplasmic side.

The protein belongs to the ITPRIP family. As to expression, expressed in testis and tumoral cells.

The protein resides in the cell membrane. Functions as a ligand of CD3E, inhibiting TCR-CD3 complex signaling to regulate T cell activation. Induces stable CD3E-NCK1 binding, thereby preventing the CD3E-ZAP70 interaction and subsequently inhibiting the activation of the downstream ERK-NFkB signaling cascade and calcium influx. The sequence is that of Inositol 1,4,5-trisphosphate receptor-interacting protein-like 1 from Homo sapiens (Human).